The primary structure comprises 740 residues: NAD(P)H-quinone oxidoreductase subunit 5, chloroplastic (740 aa).

Transmembrane regions (helical) follow at residues 9 to 29 (WIIP…LFLF), 40 to 60 (WAFQ…YLSI), 89 to 109 (IDPL…MVLI), 125 to 145 (FAYM…SNLI), 147 to 167 (IYIF…FWFT), 185 to 205 (GDFG…SFEF), 219 to 239 (NEVD…GAVA), 258 to 278 (TPIS…FLVA), 286 to 306 (VIPY…LLGA), 327 to 347 (LGYM…FHLI), 354 to 374 (ALLF…VGYS), 396 to 416 (ITFL…CFWS), 425 to 445 (WLYS…TAFY), 543 to 563 (LFPI…GIPF), 602 to 622 (VLSV…YKPI), and 717 to 737 (SYLF…YLLF).

Belongs to the complex I subunit 5 family. NDH is composed of at least 16 different subunits, 5 of which are encoded in the nucleus.

It localises to the plastid. It is found in the chloroplast thylakoid membrane. It catalyses the reaction a plastoquinone + NADH + (n+1) H(+)(in) = a plastoquinol + NAD(+) + n H(+)(out). The catalysed reaction is a plastoquinone + NADPH + (n+1) H(+)(in) = a plastoquinol + NADP(+) + n H(+)(out). In terms of biological role, NDH shuttles electrons from NAD(P)H:plastoquinone, via FMN and iron-sulfur (Fe-S) centers, to quinones in the photosynthetic chain and possibly in a chloroplast respiratory chain. The immediate electron acceptor for the enzyme in this species is believed to be plastoquinone. Couples the redox reaction to proton translocation, and thus conserves the redox energy in a proton gradient. The protein is NAD(P)H-quinone oxidoreductase subunit 5, chloroplastic (ndhF) of Nicotiana tabacum (Common tobacco).